The chain runs to 83 residues: Hainantoxin-III (83 aa).

An N-terminal signal peptide occupies residues 1–21 (MKASMFLALAGLVLLFVVGYA). Residues 22-48 (SESEEKEFPRELLSKIFALDDFKGEER) constitute a propeptide that is removed on maturation. Disulfide bonds link Cys-50-Cys-65, Cys-57-Cys-70, and Cys-64-Cys-77. Leu-81 carries the leucine amide modification.

The protein belongs to the neurotoxin 10 (Hwtx-1) family. 15 (Hntx-3) subfamily. In terms of assembly, monomer. As to expression, expressed by the venom gland.

The protein resides in the secreted. Its function is as follows. Selective antagonist of neuronal tetrodotoxin (TTX)-sensitive voltage-gated sodium channels (IC(50)=1270 nM on Nav1.1/SCN1A, 270 nM on Nav1.2/SCN2A, 491 nM on Nav1.3/SCN3A and 232 nM on Nav1.7/SCN9A). This toxin suppress Nav1.7 current amplitude without significantly altering the activation, inactivation, and repriming kinetics. Short extreme depolarizations partially activate the toxin-bound channel, indicating voltage-dependent inhibition of this toxin. This toxin increases the deactivation of the Nav1.7 current after extreme depolarizations. The toxin-Nav1.7 complex is gradually dissociated upon prolonged strong depolarizations in a voltage-dependent manner, and the unbound toxin rebinds to Nav1.7 after a long repolarization. Moreover, analysis of chimeric channels showed that the DIIS3-S4 linker is critical for toxin binding to Nav1.7. These data are consistent with this toxin interacting with Nav1.7 site 4 and trapping the domain II voltage sensor in the closed state. The chain is Hainantoxin-III from Cyriopagopus hainanus (Chinese bird spider).